The chain runs to 232 residues: MLKLTDITWLYHHLPMRFSLTVERGEQVAILGPSGAGKSTLLNLIAGFLTPASGSLTIDGVDHTTTPPSRRPVSMLFQENNLFSHLTVAQNIGLGLNPGLKLNAAQQEKMHAIARQMGIDNLMARLPGELSGGQRQRVALARCLVREQPILLLDEPFSALDPALRQEMLTLVSTSCQQQKMTLLMVSHSVEDAARIATRSVVVADGRIAWQGKTEEVLSGKGSASAIWGIQG.

The ABC transporter domain maps to 2-230 (LKLTDITWLY…KGSASAIWGI (229 aa)). 32–39 (GPSGAGKS) lines the ATP pocket.

This sequence belongs to the ABC transporter superfamily. Thiamine importer (TC 3.A.1.19.1) family. As to quaternary structure, the complex is composed of two ATP-binding proteins (ThiQ), two transmembrane proteins (ThiP) and a solute-binding protein (ThiB).

It localises to the cell inner membrane. It carries out the reaction thiamine(out) + ATP + H2O = thiamine(in) + ADP + phosphate + H(+). Its function is as follows. Part of the ABC transporter complex ThiBPQ involved in thiamine import. Responsible for energy coupling to the transport system. This chain is Thiamine import ATP-binding protein ThiQ, found in Shigella flexneri.